The chain runs to 214 residues: RNA pyrophosphohydrolase (214 aa).

The Nudix hydrolase domain maps to 6–149 (GFRPNVGIIL…KRDVYQLALT (144 aa)). Positions 38 to 59 (GGIKYGETPMQAMYRELHEETG) match the Nudix box motif.

It belongs to the Nudix hydrolase family. RppH subfamily. Requires a divalent metal cation as cofactor.

Accelerates the degradation of transcripts by removing pyrophosphate from the 5'-end of triphosphorylated RNA, leading to a more labile monophosphorylated state that can stimulate subsequent ribonuclease cleavage. The polypeptide is RNA pyrophosphohydrolase (Burkholderia cenocepacia (strain ATCC BAA-245 / DSM 16553 / LMG 16656 / NCTC 13227 / J2315 / CF5610) (Burkholderia cepacia (strain J2315))).